The primary structure comprises 314 residues: Mevalonate kinase (314 aa).

103–109 (GLGTSAA) is a binding site for ATP. The active-site Proton acceptor is the aspartate 150.

The protein belongs to the GHMP kinase family. Mevalonate kinase subfamily. Homodimer. It depends on Mg(2+) as a cofactor.

The protein localises to the cytoplasm. It carries out the reaction (R)-mevalonate + ATP = (R)-5-phosphomevalonate + ADP + H(+). It participates in isoprenoid biosynthesis; isopentenyl diphosphate biosynthesis via mevalonate pathway; isopentenyl diphosphate from (R)-mevalonate: step 1/3. Catalyzes the phosphorylation of (R)-mevalonate (MVA) to (R)-mevalonate 5-phosphate (MVAP). Functions in the mevalonate (MVA) pathway leading to isopentenyl diphosphate (IPP), a key precursor for the biosynthesis of isoprenoid compounds such as archaeal membrane lipids. In Saccharolobus solfataricus (strain ATCC 35092 / DSM 1617 / JCM 11322 / P2) (Sulfolobus solfataricus), this protein is Mevalonate kinase.